The chain runs to 388 residues: Isocitrate dehydrogenase [NAD] subunit 1, mitochondrial (388 aa).

A mitochondrion-targeting transit peptide spans 1-35 (MFSLRTAQPAQSLFRAATNTYSTSLPRSAIAARSF). Substrate is bound by residues R137, R168, and D255. D255 provides a ligand contact to Mg(2+).

This sequence belongs to the isocitrate and isopropylmalate dehydrogenases family. In terms of assembly, octamer of two non-identical subunits IDH1 and IDH2. Requires Mg(2+) as cofactor. Mn(2+) serves as cofactor.

The protein resides in the mitochondrion. It catalyses the reaction D-threo-isocitrate + NAD(+) = 2-oxoglutarate + CO2 + NADH. Functionally, performs an essential role in the oxidative function of the citric acid cycle. The chain is Isocitrate dehydrogenase [NAD] subunit 1, mitochondrial (IDH1) from Ajellomyces capsulatus (Darling's disease fungus).